The chain runs to 583 residues: Steryl-sulfatase (583 aa).

Positions 1–21 are cleaved as a signal peptide; sequence MPLRKMKIPFLLLFFLWEAES. The Lumenal portion of the chain corresponds to 22 to 184; the sequence is HAASRPNIIL…GSVFTTGFKR (163 aa). 2 residues coordinate Ca(2+): aspartate 35 and aspartate 36. Asparagine 47 is a glycosylation site (N-linked (GlcNAc...) asparagine). Position 75 (cysteine 75) interacts with Ca(2+). The Nucleophile role is filled by cysteine 75. Position 75 is a 3-oxoalanine (Cys) (cysteine 75). Histidine 136 is a catalytic residue. 2 cysteine pairs are disulfide-bonded: cysteine 141–cysteine 148 and cysteine 170–cysteine 242. The helical transmembrane segment at 185-208 threads the bilayer; it reads LVFLPLQIVGVTLLTLAALNCLGL. At 209 to 212 the chain is on the cytoplasmic side; that stretch reads LHVP. A helical membrane pass occupies residues 213 to 234; sequence LGVFFSLLFLAALILTLFLGFL. Residues 235 to 583 are Lumenal-facing; that stretch reads HYFRPLNCFM…REKQDKRLSR (349 aa). Asparagine 259 is a glycosylation site (N-linked (GlcNAc...) asparagine). Aspartate 342 and glutamine 343 together coordinate Ca(2+). 4 disulfides stabilise this stretch: cysteine 446–cysteine 489, cysteine 481–cysteine 487, cysteine 562–cysteine 570, and cysteine 563–cysteine 572.

This sequence belongs to the sulfatase family. Homodimer. Ca(2+) is required as a cofactor. The conversion to 3-oxoalanine (also known as C-formylglycine, FGly), of a serine or cysteine residue in prokaryotes and of a cysteine residue in eukaryotes, is critical for catalytic activity.

It is found in the cytoplasmic vesicle. The protein resides in the secretory vesicle. The protein localises to the microneme membrane. Its subcellular location is the endoplasmic reticulum membrane. It catalyses the reaction dehydroepiandrosterone 3-sulfate + H2O = 3beta-hydroxyandrost-5-en-17-one + sulfate + H(+). It carries out the reaction estrone 3-sulfate + H2O = estrone + sulfate + H(+). In terms of biological role, catalyzes the conversion of sulfated steroid precursors, such as dehydroepiandrosterone sulfate (DHEA-S) and estrone sulfate to the free steroid. This is Steryl-sulfatase (STS) from Homo sapiens (Human).